A 405-amino-acid polypeptide reads, in one-letter code: MDHLPMPKFGPLAGLRVVFSGIEIAGPFAGQMFAEWGAEVIWIENVAWADTIRVQPNYPQLSRRNLHALSLNIFKDEGREAFLKLMETTDIFIEASKGPAFARRGITDEVLWQHNPKLVIAHLSGFGQYGTEEYTNLPAYNTIAQAFSGYLIQNGDVDQPMPAFPYTADYFSGLTATTAALAALHKARETGKGESIDIAMYEVMLRMGQYFMMDYFNGGEMCPRMSKGKDPYYAGCGLYKCADGYIVMELVGITQIEECFKDIGLAHLLSTPEIPEGTQLIHRIECPYGPLVEEKLDAWLAAHTIAEVKERFAELNIACAKVLTVPELESNPQYVARESITQWQTMDGRTCKGPNIMPKFKNNPGQIWRGMPSHGMDTAAILKNIGYSENDIQELVSKGLAKVED.

2 residues coordinate CoA: K97 and R104. Residue D169 is the Nucleophile of the active site.

This sequence belongs to the CoA-transferase III family. CaiB subfamily. Homodimer.

Its subcellular location is the cytoplasm. The catalysed reaction is crotonobetainyl-CoA + (R)-carnitine = crotonobetaine + (R)-carnitinyl-CoA. It carries out the reaction 4-(trimethylamino)butanoyl-CoA + (R)-carnitine = (R)-carnitinyl-CoA + 4-(trimethylamino)butanoate. It participates in amine and polyamine metabolism; carnitine metabolism. In terms of biological role, catalyzes the reversible transfer of the CoA moiety from gamma-butyrobetainyl-CoA to L-carnitine to generate L-carnitinyl-CoA and gamma-butyrobetaine. Is also able to catalyze the reversible transfer of the CoA moiety from gamma-butyrobetainyl-CoA or L-carnitinyl-CoA to crotonobetaine to generate crotonobetainyl-CoA. This Escherichia coli O139:H28 (strain E24377A / ETEC) protein is L-carnitine CoA-transferase.